The sequence spans 866 residues: Speckle targeted PIP5K1A-regulated poly(A) polymerase (866 aa).

The segment at 16-46 (FRCCLCDVTTANRPSLDAHLKGRKHRDLVQL) adopts a Matrin-type zinc-finger fold. The RRM domain occupies 56–128 (RSVFVSGFPR…HTLRVRPREQ (73 aa)). The tract at residues 116 to 147 (LGGHTLRVRPREQKEFQSPASKSPKGVDSNSH) is disordered. Serine 205 is a binding site for ATP. The Mg(2+) site is built by aspartate 216 and aspartate 218. Positions 216 and 218 each coordinate UTP. Disordered regions lie at residues 223 to 249 (LGDM…STLA) and 267 to 321 (LSPT…EGKH). Polar residues predominate over residues 282–304 (TPSSLAPQTPDSALGSDTVTSPQ). Asparagine 393 is a binding site for ATP. UTP-binding residues include asparagine 393, arginine 415, tyrosine 433, and histidine 550. The PAP-associated domain occupies 492-550 (LSSLLAQFFSCVSCWDLSGSLLSLREGQALMVAGGLPSDLWEGLRLGPMNLQDPFDLSH). The KA1; binds the bulging loops of U6 snRNA but is dispensable for terminal uridylyltransferase activity stretch occupies residues 599–866 (SSPSSLLSAK…IPQALKNLLK (268 aa)). Disordered stretches follow at residues 638–687 (QGTK…DHSE), 728–755 (EQNP…PSSV), and 773–792 (RRRF…STGA). Over residues 669-687 (KSCEEGKEEPQGCAGDHSE) the composition is skewed to basic and acidic residues. A phosphoserine mark is found at serine 686 and serine 741.

The protein belongs to the DNA polymerase type-B-like family. As to quaternary structure, associates with the cleavage and polyadenylation specificity factor (CPSF) complex. Interacts with CPSF1 and CPSF3; the interaction is direct. Interacts with PIP5K1A. It depends on Mg(2+) as a cofactor. The cofactor is Mn(2+). In terms of processing, phosphorylated by CK1 in the proline-rich (Pro-rich) region.

The protein resides in the nucleus. The protein localises to the nucleolus. It is found in the nucleus speckle. The catalysed reaction is RNA(n) + UTP = RNA(n)-3'-uridine ribonucleotide + diphosphate. It carries out the reaction RNA(n) + ATP = RNA(n)-3'-adenine ribonucleotide + diphosphate. With respect to regulation, adenylyltransferase activity is specifically phosphatidylinositol 4,5-bisphosphate (PtdIns(4,5)P2). In terms of biological role, poly(A) polymerase that creates the 3'-poly(A) tail of specific pre-mRNAs. Localizes to nuclear speckles together with PIP5K1A and mediates polyadenylation of a select set of mRNAs, such as HMOX1. In addition to polyadenylation, it is also required for the 3'-end cleavage of pre-mRNAs: binds to the 3'UTR of targeted pre-mRNAs and promotes the recruitment and assembly of the CPSF complex on the 3'UTR of pre-mRNAs. In addition to adenylyltransferase activity, also has uridylyltransferase activity. However, the ATP ratio is higher than UTP in cells, suggesting that it functions primarily as a poly(A) polymerase. Acts as a specific terminal uridylyltransferase for U6 snRNA in vitro: responsible for a controlled elongation reaction that results in the restoration of the four 3'-terminal UMP-residues found in newly transcribed U6 snRNA. Not involved in replication-dependent histone mRNA degradation. The protein is Speckle targeted PIP5K1A-regulated poly(A) polymerase (Tut1) of Rattus norvegicus (Rat).